A 667-amino-acid polypeptide reads, in one-letter code: Acyl-coenzyme A oxidase acox-3 (667 aa).

Residues 138–141 (FCLT), 146–147 (GS), glycine 178, arginine 313, 334–337 (QQYR), and glycine 410 contribute to the FAD site. Glutamate 433 functions as the Proton acceptor in the catalytic mechanism. Residue glutamate 435 participates in FAD binding. The short motif at 665 to 667 (SKL) is the Microbody targeting signal element.

It belongs to the acyl-CoA oxidase family. In terms of assembly, homodimer. It depends on FAD as a cofactor. Expressed in intestine.

The protein resides in the peroxisome. The catalysed reaction is IC-asc-C7-CoA + O2 = IC-asc-DeltaC7-CoA + H2O2. The enzyme catalyses IC-asc-C9-CoA + O2 = IC-asc-DeltaC9-CoA + H2O2. It catalyses the reaction asc-C13-CoA + O2 = asc-DeltaC13-CoA + H2O2. Its pathway is lipid metabolism; peroxisomal fatty acid beta-oxidation. In contrast to other acyl-coenzyme A oxidases which bind to and are activated by ATP, does not bind ATP. In terms of biological role, involved in the first step of peroxisomal beta-oxidation by catalyzing the desaturation of fatty acid-derived side chains of ascaroside pheromones, which regulates development and behavior. Specifically, shortens indol-3-carbonyl(IC)-ascarosides with 7-carbon (IC-asc-C7) or 9-carbon (IC-asc-C9) side chains and contributes to the shortening of ascarosides with 13-carbon (asc-C13) and 15-carbon (asc-C15) side chains. This Caenorhabditis elegans protein is Acyl-coenzyme A oxidase acox-3.